A 324-amino-acid chain; its full sequence is Beta-ketoacyl-[acyl-carrier-protein] synthase III (324 aa).

Residues Cys114 and His246 contribute to the active site. An ACP-binding region spans residues 247 to 251 (QANLR). Asn276 is a catalytic residue.

The protein belongs to the thiolase-like superfamily. FabH family. Homodimer.

The protein resides in the cytoplasm. It catalyses the reaction malonyl-[ACP] + acetyl-CoA + H(+) = 3-oxobutanoyl-[ACP] + CO2 + CoA. The protein operates within lipid metabolism; fatty acid biosynthesis. Catalyzes the condensation reaction of fatty acid synthesis by the addition to an acyl acceptor of two carbons from malonyl-ACP. Catalyzes the first condensation reaction which initiates fatty acid synthesis and may therefore play a role in governing the total rate of fatty acid production. Possesses both acetoacetyl-ACP synthase and acetyl transacylase activities. Its substrate specificity determines the biosynthesis of branched-chain and/or straight-chain of fatty acids. The polypeptide is Beta-ketoacyl-[acyl-carrier-protein] synthase III (Campylobacter jejuni subsp. jejuni serotype O:2 (strain ATCC 700819 / NCTC 11168)).